The following is a 270-amino-acid chain: Glucosamine-6-phosphate deaminase (270 aa).

Catalysis depends on Asp-72, which acts as the Proton acceptor; for enolization step. Asp-141 functions as the For ring-opening step in the catalytic mechanism. His-143 acts as the Proton acceptor; for ring-opening step in catalysis. The active-site For ring-opening step is the Glu-148.

This sequence belongs to the glucosamine/galactosamine-6-phosphate isomerase family. NagB subfamily.

It carries out the reaction alpha-D-glucosamine 6-phosphate + H2O = beta-D-fructose 6-phosphate + NH4(+). Its pathway is amino-sugar metabolism; N-acetylneuraminate degradation; D-fructose 6-phosphate from N-acetylneuraminate: step 5/5. Allosterically activated by N-acetylglucosamine 6-phosphate (GlcNAc6P). In terms of biological role, catalyzes the reversible isomerization-deamination of glucosamine 6-phosphate (GlcN6P) to form fructose 6-phosphate (Fru6P) and ammonium ion. In Bacteroides fragilis (strain ATCC 25285 / DSM 2151 / CCUG 4856 / JCM 11019 / LMG 10263 / NCTC 9343 / Onslow / VPI 2553 / EN-2), this protein is Glucosamine-6-phosphate deaminase.